The following is a 794-amino-acid chain: Copper-exporting P-type ATPase (794 aa).

2 HMA domains span residues 5 to 70 (KKTT…YGVL) and 72 to 138 (ETAE…YDAQ). Residues Cys16, Cys19, Cys83, and Cys86 each coordinate Cu(+). The next 6 helical transmembrane spans lie at 162–182 (IISA…LFGI), 187–207 (IFMN…IIGW), 224–244 (MDVL…YEMV), 250–270 (ANVM…LILF), 411–431 (YFVP…IAFV), and 438–458 (PALV…LGLA). Asp495 functions as the 4-aspartylphosphate intermediate in the catalytic mechanism. The Mg(2+) site is built by Asp689 and Asp693. 2 helical membrane-spanning segments follow: residues 747 to 766 (LFWA…LGLL) and 770 to 789 (IAGA…ALRL).

Belongs to the cation transport ATPase (P-type) (TC 3.A.3) family. Type IB subfamily.

It localises to the cell membrane. It catalyses the reaction Cu(+)(in) + ATP + H2O = Cu(+)(out) + ADP + phosphate + H(+). Involved in copper export. The sequence is that of Copper-exporting P-type ATPase (copA) from Staphylococcus saprophyticus subsp. saprophyticus (strain ATCC 15305 / DSM 20229 / NCIMB 8711 / NCTC 7292 / S-41).